Here is an 839-residue protein sequence, read N- to C-terminus: Autophagy-related protein 9A (839 aa).

A disordered region spans residues 1–20; that stretch reads MAQFDTEYQRLEASYSDSPP. Ala-2 carries the post-translational modification N-acetylalanine. Over 2-61 the chain is Cytoplasmic; the sequence is AQFDTEYQRLEASYSDSPPGEEDLLVHVAEGSKSPWHHIENLDLFFSRVYNLHQKNGFTC. Positions 8 to 11 match the Tyrosine-based sorting signal motif; sequence YQRL. Ser-14, Ser-16, and Ser-18 each carry phosphoserine. The chain crosses the membrane as a helical span at residues 62–84; the sequence is MLIGEIFELMQFLFVVAFTTFLV. Over 85–128 the chain is Lumenal; that stretch reads SCVDYDILFANKMVNHSLHPTEPVKVTLPDAFLPAQVCSARIQE. The N-linked (GlcNAc...) asparagine glycan is linked to Asn-99. Residues 129-154 form a helical membrane-spanning segment; sequence NGSLITILVIAGVFWIHRLIKFIYNI. The Cytoplasmic segment spans residues 155-290; sequence CCYWEIHSFY…ELAQRLSNRI (136 aa). An intramembrane segment occupies 291 to 301; the sequence is LWIGIANFLLC. Residues 302-319 are Cytoplasmic-facing; the sequence is PLILIWQILYAFFSYAEV. Residues 320–328 lie within the membrane without spanning it; the sequence is LKREPGALG. The Cytoplasmic segment spans residues 329 to 371; it reads ARCWSLYGRCYLRHFNELEHELQSRLNRGYKPASKYMNCFLSP. A helical membrane pass occupies residues 372–397; sequence LLTLLAKNGAFFAGSILAVLIALTIY. Residues 398–406 are Lumenal-facing; that stretch reads DEDVLAVEH. The helical transmembrane segment at 407–424 threads the bilayer; it reads VLTTVTLLGVTVTVCRSF. At 425–470 the chain is on the cytoplasmic side; the sequence is IPDQHMVFCPEQLLRVILAHIHYMPDHWQGNAHRSQTRDEFAQLFQ. Residues 471-480 lie within the membrane without spanning it; that stretch reads YKAVFILEEL. The Cytoplasmic segment spans residues 481 to 483; the sequence is LSP. An intramembrane segment occupies 484–492; the sequence is IVTPLILIF. The Cytoplasmic segment spans residues 493-839; it reads CLRPRALEII…DELPPQVHKV (347 aa). 5 positions are modified to phosphoserine: Ser-656, Ser-735, Ser-738, Ser-741, and Ser-828. Disordered regions lie at residues 656–686 and 717–839; these read SPLQ…SSGS and HKQQ…VHKV. Positions 724–736 are enriched in basic and acidic residues; that stretch reads EPERHVWHRRESD. Acidic residues-rich tracts occupy residues 737-747 and 823-832; these read ESGESAPDEGG and VPEEGSEDEL.

The protein belongs to the ATG9 family. As to quaternary structure, homotrimer; forms a homotrimer with a central pore that forms a path between the two membrane leaflets. Interacts (via cytoplasmic its C-terminus) with ATG2A. Interacts with SUPT20H. Interacts (via the tyrosine-based sorting signal motif) with AP4M1; promoting association with the AP-4 complex. Interacts with ARFIP1 and ARFIP2. Interacts with PI4K2A and PI4KB. Interacts with ATG4A; the interaction is direct and promotes ATG9A trafficking. In terms of processing, ufmylated in a DDRGK1 dependent manner.

Its subcellular location is the preautophagosomal structure membrane. The protein resides in the cytoplasmic vesicle. It localises to the autophagosome membrane. The protein localises to the golgi apparatus. It is found in the trans-Golgi network membrane. Its subcellular location is the late endosome membrane. The protein resides in the recycling endosome membrane. It localises to the endoplasmic reticulum membrane. The protein localises to the mitochondrion membrane. The catalysed reaction is a 1,2-diacyl-sn-glycero-3-phosphocholine(in) = a 1,2-diacyl-sn-glycero-3-phosphocholine(out). It carries out the reaction a 1,2-diacyl-sn-glycero-3-phospho-L-serine(in) = a 1,2-diacyl-sn-glycero-3-phospho-L-serine(out). The enzyme catalyses a 1,2-diacyl-sn-glycero-3-phosphoethanolamine(in) = a 1,2-diacyl-sn-glycero-3-phosphoethanolamine(out). In terms of biological role, phospholipid scramblase involved in autophagy by mediating autophagosomal membrane expansion. Cycles between the preautophagosomal structure/phagophore assembly site (PAS) and the cytoplasmic vesicle pool and supplies membrane for the growing autophagosome. Lipid scramblase activity plays a key role in preautophagosomal structure/phagophore assembly by distributing the phospholipids that arrive through ATG2 (ATG2A or ATG2B) from the cytoplasmic to the luminal leaflet of the bilayer, thereby driving autophagosomal membrane expansion. Also required to supply phosphatidylinositol 4-phosphate to the autophagosome initiation site by recruiting the phosphatidylinositol 4-kinase beta (PI4KB) in a process dependent on ARFIP2, but not ARFIP1. In addition to autophagy, also plays a role in necrotic cell death. This is Autophagy-related protein 9A from Homo sapiens (Human).